Consider the following 593-residue polypeptide: Cell surface glycoprotein (593 aa).

The signal sequence occupies residues 1–22; it reads MRKFTLLMLLLIVISMSGIAGA. Asn29, Asn58, Asn66, Asn74, Asn114, Asn122, Asn145, Asn148, Asn158, Asn176, Asn208, Asn231, Asn326, Asn336, Asn340, Asn431, Asn471, Asn500, and Asn516 each carry an N-linked (GalNAc...) asparagine glycan.

N-glycosylated; contains glycans composed of methyl-Man, Man and GalNAc residues in a molar ratio of 2:3:1.

Its subcellular location is the secreted. It localises to the cell wall. The protein localises to the S-layer. Functionally, the S-layer is a paracrystalline mono-layered assembly of proteins which coat the surface of the cell. In Methanothermus fervidus (strain ATCC 43054 / DSM 2088 / JCM 10308 / V24 S), this protein is Cell surface glycoprotein (slgA).